We begin with the raw amino-acid sequence, 120 residues long: Large ribosomal subunit protein uL18 (120 aa).

This sequence belongs to the universal ribosomal protein uL18 family. Part of the 50S ribosomal subunit; part of the 5S rRNA/L5/L18/L25 subcomplex. Contacts the 5S and 23S rRNAs.

In terms of biological role, this is one of the proteins that bind and probably mediate the attachment of the 5S RNA into the large ribosomal subunit, where it forms part of the central protuberance. In Geobacillus kaustophilus (strain HTA426), this protein is Large ribosomal subunit protein uL18.